Here is a 1019-residue protein sequence, read N- to C-terminus: Macrophage colony-stimulating factor 1 receptor 2 (1019 aa).

A signal peptide spans 1-18 (MKSYCLLLSITLSCCCSA). The Extracellular portion of the chain corresponds to 19–576 (EDLPDPPSIH…LREHNSAFMS (558 aa)). 3 consecutive Ig-like C2-type domains span residues 37–109 (QAEA…IHLY), 106–212 (IHLY…LLVA), and 224–312 (QNKA…LIVL). Residues Cys52 and Cys92 are joined by a disulfide bond. 14 N-linked (GlcNAc...) asparagine glycosylation sites follow: Asn96, Asn148, Asn169, Asn249, Asn342, Asn346, Asn355, Asn369, Asn379, Asn408, Asn422, Asn429, Asn433, and Asn514. Intrachain disulfides connect Cys139–Cys193 and Cys239–Cys294. Ig-like C2-type domains are found at residues 383 to 474 (STTV…LRIY) and 487 to 567 (TLTC…VFHL). A disulfide bond links Cys490 and Cys552. The chain crosses the membrane as a helical span at residues 577–597 (ALIGAGSTAAILFLLLLVVFY). Topologically, residues 598-1019 (KWRQKPKYEI…LSVTNIYQLS (422 aa)) are cytoplasmic. The interval 601 to 633 (QKPKYEIRWKIIESTEGNHYTFVDPTLLPYNYK) is regulatory juxtamembrane domain. A Phosphotyrosine; by autocatalysis modification is found at Tyr620. The 323-residue stretch at 641–963 (LRLGAVLGSG…MICQLIDRLL (323 aa)) folds into the Protein kinase domain. Residues 647–655 (LGSGAFGKV) and Lys674 each bind ATP. Phosphotyrosine; by autocatalysis is present on residues Tyr756 and Tyr778. The active-site Proton acceptor is Asp827. The tract at residues 845–867 (DFGLARDIQNDDSYIVQGNARLP) is activation loop. Phosphotyrosine; by autocatalysis occurs at positions 858 and 974. The tract at residues 970-1001 (NHQSYSNINETKKDDFKGGKSQRRGEEEEQRR) is disordered. Residues 979–1001 (ETKKDDFKGGKSQRRGEEEEQRR) show a composition bias toward basic and acidic residues. Position 1016 is a phosphotyrosine; by autocatalysis (Tyr1016).

Belongs to the protein kinase superfamily. Tyr protein kinase family. CSF-1/PDGF receptor subfamily. As to quaternary structure, monomer. Homodimer. Interacts with CSF1. Post-translationally, autophosphorylated in response to CSF1 binding. autophosphorylation, leading to its degradation. In terms of processing, ubiquitinated. Becomes rapidly polyubiquitinated after autophosphorylation, leading to its degradation.

The protein resides in the cell membrane. It carries out the reaction L-tyrosyl-[protein] + ATP = O-phospho-L-tyrosyl-[protein] + ADP + H(+). Present in an inactive conformation in the absence of bound ligand. CSF1 binding leads to dimerization and activation by autophosphorylation on tyrosine residues. In terms of biological role, tyrosine-protein kinase that acts as a cell-surface receptor for CSF1 and plays an essential role in the regulation of survival, proliferation and differentiation of hematopoietic precursor cells, especially mononuclear phagocytes, such as macrophages and monocytes. Plays an important role in innate immunity and in inflammatory processes. Plays an important role in the regulation of osteoclast proliferation and differentiation, the regulation of bone resorption, and is required for normal bone development. Promotes reorganization of the actin cytoskeleton, regulates formation of membrane ruffles, cell adhesion and cell migration. Activates several signaling pathways in response to ligand binding. This Takifugu rubripes (Japanese pufferfish) protein is Macrophage colony-stimulating factor 1 receptor 2 (csf1r2).